We begin with the raw amino-acid sequence, 201 residues long: Recombination protein RecR (201 aa).

The segment at 57 to 72 (CECCRTLTEEPLCRIC) adopts a C4-type zinc-finger fold. The Toprim domain maps to 81–176 (GVLCIVETPA…NTTRIAHGVP (96 aa)).

Belongs to the RecR family.

Its function is as follows. May play a role in DNA repair. It seems to be involved in an RecBC-independent recombinational process of DNA repair. It may act with RecF and RecO. The polypeptide is Recombination protein RecR (Idiomarina loihiensis (strain ATCC BAA-735 / DSM 15497 / L2-TR)).